The chain runs to 153 residues: Cornifin-B (153 aa).

2 disordered regions span residues 1-35 (MSSH…PCVS) and 49-85 (CHPK…HPKA). A run of 14 repeats spans residues 27–34 (PPPPEPCV), 35–42 (SQVKTPCD), 43–50 (TKVPEPCH), 51–58 (PKAPEPCH), 59–66 (PKAPEPCH), 67–74 (PKAPEPCH), 75–82 (PKAPEPCH), 83–90 (PKAPEPCH), 91–98 (PKAPEPCH), 99–106 (PKAPEPCH), 107–114 (PKAPEPCH), 115–122 (PKVPEPCL), 123–130 (PKAPEPCQ), and 131–138 (PIVPEPCP). Residues 27 to 138 (PPPPEPCVSQ…CQPIVPEPCP (112 aa)) are 14 X 8 AA approximate tandem repeats.

The protein belongs to the cornifin (SPRR) family. In terms of tissue distribution, expressed in fetal periderm, hair follicles and in the thickened epidermis of the lip and footpad. Also present in the epithelia of various tissues such as the penis, vagina, forestomach, tongue and esophagus.

It is found in the cytoplasm. Cross-linked envelope protein of keratinocytes. It is a keratinocyte protein that first appears in the cell cytosol, but ultimately becomes cross-linked to membrane proteins by transglutaminase. All that results in the formation of an insoluble envelope beneath the plasma membrane. In Mus musculus (Mouse), this protein is Cornifin-B (Sprr1b).